The sequence spans 104 residues: Sweet protein mabinlin-3 (104 aa).

Intrachain disulfides connect Cys-4–Cys-53, Cys-17–Cys-42, Cys-43–Cys-91, and Cys-55–Cys-99.

It belongs to the 2S seed storage albumins family. Heterodimer of a small A and a large B chain linked by disulfide bonds.

Functionally, heat stable 2S seed storage protein having sweetness-inducing activity. The protein is Sweet protein mabinlin-3 of Capparis masaikai (Mabinlang).